The chain runs to 217 residues: Adenylate kinase (217 aa).

10 to 15 lines the ATP pocket; that stretch reads GAGKGT. The tract at residues 30 to 59 is NMP; the sequence is STGDMLRAAIREGTELGLKAKSVMESGGLV. AMP-binding positions include threonine 31, arginine 36, 57-59, 85-88, and glutamine 92; these read GLV and GFPR. Residues 122-159 form an LID region; the sequence is GRRQHPASGRVYHVVYNPPKVEGKDDETGEDLVQRPDD. ATP-binding positions include arginine 123 and 132–133; that span reads VY. AMP-binding residues include arginine 156 and arginine 167. Position 202 (arginine 202) interacts with ATP.

Belongs to the adenylate kinase family. As to quaternary structure, monomer.

Its subcellular location is the cytoplasm. It catalyses the reaction AMP + ATP = 2 ADP. Its pathway is purine metabolism; AMP biosynthesis via salvage pathway; AMP from ADP: step 1/1. In terms of biological role, catalyzes the reversible transfer of the terminal phosphate group between ATP and AMP. Plays an important role in cellular energy homeostasis and in adenine nucleotide metabolism. The chain is Adenylate kinase from Acinetobacter baumannii (strain AB307-0294).